A 481-amino-acid chain; its full sequence is tRNA-2-methylthio-N(6)-dimethylallyladenosine synthase (481 aa).

Residues 24–140 (RKLFIESYGC…LPNLINEVEE (117 aa)) enclose the MTTase N-terminal domain. [4Fe-4S] cluster is bound by residues C33, C69, C103, C178, C182, and C185. The Radical SAM core domain maps to 164–410 (QSNGVSAFVS…VDLQQKHSKQ (247 aa)). The 64-residue stretch at 413–476 (NSVIGTTVEV…SATLIGEPIG (64 aa)) folds into the TRAM domain.

The protein belongs to the methylthiotransferase family. MiaB subfamily. In terms of assembly, monomer. Requires [4Fe-4S] cluster as cofactor.

It localises to the cytoplasm. It carries out the reaction N(6)-dimethylallyladenosine(37) in tRNA + (sulfur carrier)-SH + AH2 + 2 S-adenosyl-L-methionine = 2-methylsulfanyl-N(6)-dimethylallyladenosine(37) in tRNA + (sulfur carrier)-H + 5'-deoxyadenosine + L-methionine + A + S-adenosyl-L-homocysteine + 2 H(+). Functionally, catalyzes the methylthiolation of N6-(dimethylallyl)adenosine (i(6)A), leading to the formation of 2-methylthio-N6-(dimethylallyl)adenosine (ms(2)i(6)A) at position 37 in tRNAs that read codons beginning with uridine. The sequence is that of tRNA-2-methylthio-N(6)-dimethylallyladenosine synthase from Christiangramia forsetii (strain DSM 17595 / CGMCC 1.15422 / KT0803) (Gramella forsetii).